The following is a 304-amino-acid chain: Energy-coupling factor transporter ATP-binding protein EcfA2 (304 aa).

The 259-residue stretch at 3 to 261 folds into the ABC transporter domain; it reads IIVKNISYIY…EKFLVENKLK (259 aa). 40–47 contributes to the ATP binding site; the sequence is GSTGSGKT.

The protein belongs to the ABC transporter superfamily. Energy-coupling factor EcfA family. In terms of assembly, forms a stable energy-coupling factor (ECF) transporter complex composed of 2 membrane-embedded substrate-binding proteins (S component), 2 ATP-binding proteins (A component) and 2 transmembrane proteins (T component).

The protein localises to the cell membrane. ATP-binding (A) component of a common energy-coupling factor (ECF) ABC-transporter complex. Unlike classic ABC transporters this ECF transporter provides the energy necessary to transport a number of different substrates. The sequence is that of Energy-coupling factor transporter ATP-binding protein EcfA2 from Mycoplasmopsis pulmonis (strain UAB CTIP) (Mycoplasma pulmonis).